The chain runs to 246 residues: Large ribosomal subunit protein uL3 (246 aa).

Disordered stretches follow at residues 140–162 and 214–246; these read SHRS…NKKM and ADVP…EENA. Position 151 is an N5-methylglutamine (Q151). Residues 234–246 are compositionally biased toward low complexity; sequence EAAPEAPASEENA.

The protein belongs to the universal ribosomal protein uL3 family. In terms of assembly, part of the 50S ribosomal subunit. Forms a cluster with proteins L14 and L19. In terms of processing, methylated by PrmB.

In terms of biological role, one of the primary rRNA binding proteins, it binds directly near the 3'-end of the 23S rRNA, where it nucleates assembly of the 50S subunit. This is Large ribosomal subunit protein uL3 from Methylorubrum extorquens (strain CM4 / NCIMB 13688) (Methylobacterium extorquens).